The sequence spans 409 residues: Serine/threonine transporter SstT (409 aa).

9 consecutive transmembrane segments (helical) span residues 17-37 (LVGQ…FFPA), 49-69 (FVSA…MASI), 83-103 (ILLL…IASF), 142-162 (ALIS…GIAF), 180-200 (VSLI…GLVA), 218-238 (LVVL…LIVF), 301-321 (GAAI…GIAV), 331-351 (VVAS…LLLI), and 357-377 (LFGI…IIAI).

It belongs to the dicarboxylate/amino acid:cation symporter (DAACS) (TC 2.A.23) family.

It is found in the cell inner membrane. The enzyme catalyses L-serine(in) + Na(+)(in) = L-serine(out) + Na(+)(out). The catalysed reaction is L-threonine(in) + Na(+)(in) = L-threonine(out) + Na(+)(out). In terms of biological role, involved in the import of serine and threonine into the cell, with the concomitant import of sodium (symport system). The polypeptide is Serine/threonine transporter SstT (Pseudomonas aeruginosa (strain UCBPP-PA14)).